We begin with the raw amino-acid sequence, 514 residues long: tRNA-2-methylthio-N(6)-dimethylallyladenosine synthase (514 aa).

The disordered stretch occupies residues 1–21 (MNEEQRKASSVDVLAERDKKA). Positions 68-186 (RTFLIKTYGC…LPEILEEAYL (119 aa)) constitute an MTTase N-terminal domain. Residues Cys77, Cys113, Cys147, Cys223, Cys227, and Cys230 each coordinate [4Fe-4S] cluster. The Radical SAM core domain occupies 209–440 (REGNIKAWVN…KKVGHYSQIA (232 aa)). The TRAM domain occupies 442-505 (SKYEGQTVTV…QYSLNGSFVK (64 aa)).

This sequence belongs to the methylthiotransferase family. MiaB subfamily. Monomer. It depends on [4Fe-4S] cluster as a cofactor.

Its subcellular location is the cytoplasm. The enzyme catalyses N(6)-dimethylallyladenosine(37) in tRNA + (sulfur carrier)-SH + AH2 + 2 S-adenosyl-L-methionine = 2-methylsulfanyl-N(6)-dimethylallyladenosine(37) in tRNA + (sulfur carrier)-H + 5'-deoxyadenosine + L-methionine + A + S-adenosyl-L-homocysteine + 2 H(+). Its function is as follows. Catalyzes the methylthiolation of N6-(dimethylallyl)adenosine (i(6)A), leading to the formation of 2-methylthio-N6-(dimethylallyl)adenosine (ms(2)i(6)A) at position 37 in tRNAs that read codons beginning with uridine. This Staphylococcus aureus (strain MRSA252) protein is tRNA-2-methylthio-N(6)-dimethylallyladenosine synthase.